A 200-amino-acid chain; its full sequence is Cleavage and polyadenylation specificity factor subunit 5 (200 aa).

One can recognise a Nudix hydrolase domain in the interval L45–E170. The segment at N70 to F72 is interaction with RNA. Residues G77–S98 carry the Nudix box motif.

This sequence belongs to the Nudix hydrolase family. CPSF5 subfamily. As to quaternary structure, homodimer (via N- and C-terminus); binds RNA as homodimer. Component of the cleavage factor Im (CFIm) complex.

It localises to the nucleus. Its subcellular location is the cytoplasm. In terms of biological role, component of the cleavage factor Im (CFIm) complex that functions as an activator of the pre-mRNA 3'-end cleavage and polyadenylation processing required for the maturation of pre-mRNA into functional mRNAs. CFIm contributes to the recruitment of multiprotein complexes on specific sequences on the pre-mRNA 3'-end, so called cleavage and polyadenylation signals (pA signals). Most pre-mRNAs contain multiple pA signals, resulting in alternative cleavage and polyadenylation (APA) producing mRNAs with variable 3'-end formation. The CFIm complex acts as a key regulator of cleavage and polyadenylation site choice during APA through its binding to 5'-UGUA-3' elements localized in the 3'-untranslated region (UTR) for a huge number of pre-mRNAs. Binds to 5'-UGUA-3' elements localized upstream of pA signals that act as enhancers of pre-mRNA 3'-end processing. The homodimer mediates simultaneous sequence-specific recognition of two 5'-UGUA-3' elements within the pre-mRNA. Plays a role in somatic cell fate transitions and pluripotency by regulating widespread changes in gene expression through an APA-dependent function. Binds to chromatin. In Dictyostelium discoideum (Social amoeba), this protein is Cleavage and polyadenylation specificity factor subunit 5.